The following is a 271-amino-acid chain: MHAASREALAKVSSDLDAALAADNTMAVAAQAGTELFDVVDILDGDRALRVAVADSSKDAHSRVGLIEAVFGGKVSPSVLEVLKDAAEQTWSTPREFRAGLVQLGRRALLRSAEKQGQLGQVEDELFRLSRILDRESKLTQLLSDRTQEIGGRRDLLAKVLYGKVTAVTEALALQAIGRPEHNPIDDIAALAGAVAELQGRSVAHVVTAVELNEGQQQALAEKLGRIYGRAMSIHSEVDTSLLGGMIIRVGDEVIDGSTSGKLERLRASFA.

Belongs to the ATPase delta chain family. As to quaternary structure, F-type ATPases have 2 components, F(1) - the catalytic core - and F(0) - the membrane proton channel. F(1) has five subunits: alpha(3), beta(3), gamma(1), delta(1), epsilon(1). F(0) has three main subunits: a(1), b(2) and c(10-14). The alpha and beta chains form an alternating ring which encloses part of the gamma chain. F(1) is attached to F(0) by a central stalk formed by the gamma and epsilon chains, while a peripheral stalk is formed by the delta and b chains.

The protein localises to the cell membrane. Functionally, f(1)F(0) ATP synthase produces ATP from ADP in the presence of a proton or sodium gradient. F-type ATPases consist of two structural domains, F(1) containing the extramembraneous catalytic core and F(0) containing the membrane proton channel, linked together by a central stalk and a peripheral stalk. During catalysis, ATP synthesis in the catalytic domain of F(1) is coupled via a rotary mechanism of the central stalk subunits to proton translocation. In terms of biological role, this protein is part of the stalk that links CF(0) to CF(1). It either transmits conformational changes from CF(0) to CF(1) or is implicated in proton conduction. The protein is ATP synthase subunit delta of Corynebacterium glutamicum (strain R).